Here is a 624-residue protein sequence, read N- to C-terminus: DNA (cytosine-5)-methyltransferase DRM1 (624 aa).

2 UBA domains span residues 57–100 (RISD…LFNY) and 108–149 (SSKS…LLTY). Positions 160-189 (DMNININDDDDDNLYSLSSDDEEDELNNSS) are disordered. Residues 166-185 (NDDDDDNLYSLSSDDEEDEL) show a composition bias toward acidic residues. The UBA 3 domain occupies 188 to 231 (SSNEDRILQALIKMGYLREDAAIAIERCGEDASMEEVVDFICAA). Residues 291–622 (MHRPVPIPDI…EAVRRKARHM (332 aa)) form the SAM-dependent MTase DRM-type domain.

It belongs to the class I-like SAM-binding methyltransferase superfamily. DRM-methyltransferase family.

It is found in the nucleus. The catalysed reaction is a 2'-deoxycytidine in DNA + S-adenosyl-L-methionine = a 5-methyl-2'-deoxycytidine in DNA + S-adenosyl-L-homocysteine + H(+). Its function is as follows. Involved in de novo DNA methylation. Controls asymmetric and CpNpG methylation. Required for FWA gene silencing but not for the maintenance of SUP gene silencing. Functionally redundant to CMT3 to maintain non-CpG methylation. Involved in RNA-directed DNA methylation. This chain is DNA (cytosine-5)-methyltransferase DRM1 (DRM1), found in Arabidopsis thaliana (Mouse-ear cress).